The primary structure comprises 110 residues: UPF0122 protein GK1195 (110 aa).

The protein belongs to the UPF0122 family.

In terms of biological role, might take part in the signal recognition particle (SRP) pathway. This is inferred from the conservation of its genetic proximity to ftsY/ffh. May be a regulatory protein. The protein is UPF0122 protein GK1195 of Geobacillus kaustophilus (strain HTA426).